The primary structure comprises 241 residues: ATP synthase subunit a (241 aa).

The next 5 helical transmembrane spans lie at 30–50 (GQVF…ISFG), 91–111 (FIGT…LIPW), 128–148 (INTT…AGLS), 193–213 (LVVG…VMFL), and 214–234 (GLFT…YYIG).

This sequence belongs to the ATPase A chain family. In terms of assembly, F-type ATPases have 2 components, CF(1) - the catalytic core - and CF(0) - the membrane proton channel. CF(1) has five subunits: alpha(3), beta(3), gamma(1), delta(1), epsilon(1). CF(0) has four main subunits: a, b, b' and c.

Its subcellular location is the cellular thylakoid membrane. In terms of biological role, key component of the proton channel; it plays a direct role in the translocation of protons across the membrane. The chain is ATP synthase subunit a from Prochlorococcus marinus (strain AS9601).